The following is a 447-amino-acid chain: Probable ethanolamine kinase B (447 aa).

Over residues 178–208 the composition is skewed to low complexity; sequence STTISTSTSTSTSTSSTSPSTSPSLENSTLS. The disordered stretch occupies residues 178–217; it reads STTISTSTSTSTSTSSTSPSTSPSLENSTLSPRNMNTQTS.

It belongs to the choline/ethanolamine kinase family.

The protein resides in the cytoplasm. It catalyses the reaction ethanolamine + ATP = phosphoethanolamine + ADP + H(+). It functions in the pathway phospholipid metabolism; phosphatidylethanolamine biosynthesis; phosphatidylethanolamine from ethanolamine: step 1/3. Highly specific for ethanolamine phosphorylation. May be a rate-controlling step in phosphatidylethanolamine biosynthesis. This is Probable ethanolamine kinase B (etnkB) from Dictyostelium discoideum (Social amoeba).